The sequence spans 86 residues: Defensin-like protein 97 (86 aa).

A signal peptide spans 1 to 27 (MGSLRVSTFAVAVVVCLSILLMSPTDG). 4 disulfide bridges follow: cysteine 31–cysteine 74, cysteine 38–cysteine 60, cysteine 44–cysteine 71, and cysteine 48–cysteine 73.

This sequence belongs to the DEFL family.

The protein resides in the secreted. The polypeptide is Defensin-like protein 97 (LCR85) (Arabidopsis thaliana (Mouse-ear cress)).